The following is a 207-amino-acid chain: Probable RNA 2'-phosphotransferase (207 aa).

Belongs to the KptA/TPT1 family.

Functionally, removes the 2'-phosphate from RNA via an intermediate in which the phosphate is ADP-ribosylated by NAD followed by a presumed transesterification to release the RNA and generate ADP-ribose 1''-2''-cyclic phosphate (APPR&gt;P). May function as an ADP-ribosylase. The polypeptide is Probable RNA 2'-phosphotransferase (Methanosarcina acetivorans (strain ATCC 35395 / DSM 2834 / JCM 12185 / C2A)).